The following is a 163-amino-acid chain: Endoribonuclease YbeY (163 aa).

Zn(2+)-binding residues include His-121, His-125, and His-131.

It belongs to the endoribonuclease YbeY family. Zn(2+) is required as a cofactor.

It localises to the cytoplasm. Functionally, single strand-specific metallo-endoribonuclease involved in late-stage 70S ribosome quality control and in maturation of the 3' terminus of the 16S rRNA. The chain is Endoribonuclease YbeY from Synechococcus sp. (strain JA-2-3B'a(2-13)) (Cyanobacteria bacterium Yellowstone B-Prime).